We begin with the raw amino-acid sequence, 132 residues long: Small ribosomal subunit protein uS8 (132 aa).

It belongs to the universal ribosomal protein uS8 family. Part of the 30S ribosomal subunit. Contacts proteins S5 and S12.

One of the primary rRNA binding proteins, it binds directly to 16S rRNA central domain where it helps coordinate assembly of the platform of the 30S subunit. This chain is Small ribosomal subunit protein uS8, found in Bacillus anthracis (strain A0248).